Consider the following 283-residue polypeptide: ATP synthase gamma chain (283 aa).

Belongs to the ATPase gamma chain family. F-type ATPases have 2 components, CF(1) - the catalytic core - and CF(0) - the membrane proton channel. CF(1) has five subunits: alpha(3), beta(3), gamma(1), delta(1), epsilon(1). CF(0) has three main subunits: a, b and c.

The protein resides in the cell inner membrane. Functionally, produces ATP from ADP in the presence of a proton gradient across the membrane. The gamma chain is believed to be important in regulating ATPase activity and the flow of protons through the CF(0) complex. This is ATP synthase gamma chain from Ehrlichia ruminantium (strain Welgevonden).